Consider the following 369-residue polypeptide: Probable dual-specificity RNA methyltransferase RlmN (369 aa).

Glu108 serves as the catalytic Proton acceptor. In terms of domain architecture, Radical SAM core spans 114–351; sequence YPDRATLCIS…LAQGVSCTVR (238 aa). Cys121 and Cys362 are disulfide-bonded. [4Fe-4S] cluster contacts are provided by Cys128, Cys132, and Cys135. S-adenosyl-L-methionine-binding positions include 183–184, Ser217, 240–242, and Asn319; these read GE and SLH. Cys362 (S-methylcysteine intermediate) is an active-site residue.

Belongs to the radical SAM superfamily. RlmN family. The cofactor is [4Fe-4S] cluster.

Its subcellular location is the cytoplasm. It catalyses the reaction adenosine(2503) in 23S rRNA + 2 reduced [2Fe-2S]-[ferredoxin] + 2 S-adenosyl-L-methionine = 2-methyladenosine(2503) in 23S rRNA + 5'-deoxyadenosine + L-methionine + 2 oxidized [2Fe-2S]-[ferredoxin] + S-adenosyl-L-homocysteine. The enzyme catalyses adenosine(37) in tRNA + 2 reduced [2Fe-2S]-[ferredoxin] + 2 S-adenosyl-L-methionine = 2-methyladenosine(37) in tRNA + 5'-deoxyadenosine + L-methionine + 2 oxidized [2Fe-2S]-[ferredoxin] + S-adenosyl-L-homocysteine. Specifically methylates position 2 of adenine 2503 in 23S rRNA and position 2 of adenine 37 in tRNAs. The sequence is that of Probable dual-specificity RNA methyltransferase RlmN from Rhodococcus opacus (strain B4).